Consider the following 449-residue polypeptide: uncharacterized protein (449 aa).

A signal peptide spans 1-20; that stretch reads MWTALVLIWIFSLSLSESHA. Residues 21–400 are Extracellular-facing; sequence ASNDPRNFVP…PLTQAVVDKT (380 aa). N-linked (GlcNAc...) asparagine glycosylation occurs at asparagine 49. Disordered stretches follow at residues 72-101, 154-187, and 215-381; these read AHLNSMEVTTEDTSRTDVSEPATSGGAADG, MTAASSTPMTLALPAPTSTSTGRTPSTTATGHPS, and QTVA…PSTQ. 2 stretches are compositionally biased toward low complexity: residues 154–184 and 215–234; these read MTAASSTPMTLALPAPTSTSTGRTPSTTATG and QTVATTANTSSPMSTRPSPS. Composition is skewed to polar residues over residues 255–279 and 352–367; these read GPISQVSVDQPVVNTTNKSTPMPSN and TPGTDSTGPTPRSSGG. The helical transmembrane segment at 401 to 421 threads the bilayer; that stretch reads LLLVVLLLGVTLFITVLVLFA. At 422 to 449 the chain is on the cytoplasmic side; sequence LQAYESYKKKDYTQVDYLINGMYADSEM.

As to expression, highest expression in heart, placenta, liver, pancreas and colon. Also detected in brain, lung, skeletal muscle, kidney, spleen, prostate, testis, ovary and small intestine. Lowest expression in thymus and leukocytes.

Its subcellular location is the cell membrane. The protein resides in the golgi apparatus. It localises to the trans-Golgi network membrane. This is an uncharacterized protein from Homo sapiens (Human).